A 261-amino-acid chain; its full sequence is Ribosomal RNA small subunit methyltransferase J (261 aa).

Residues 109–110, 125–126, and aspartate 179 each bind S-adenosyl-L-methionine; these read RD and ER.

This sequence belongs to the methyltransferase superfamily. RsmJ family.

It is found in the cytoplasm. It catalyses the reaction guanosine(1516) in 16S rRNA + S-adenosyl-L-methionine = N(2)-methylguanosine(1516) in 16S rRNA + S-adenosyl-L-homocysteine + H(+). Functionally, specifically methylates the guanosine in position 1516 of 16S rRNA. This chain is Ribosomal RNA small subunit methyltransferase J, found in Pseudomonas aeruginosa (strain LESB58).